Consider the following 155-residue polypeptide: Large ribosomal subunit protein uL30 (155 aa).

The protein belongs to the universal ribosomal protein uL30 family. Part of the 50S ribosomal subunit.

This chain is Large ribosomal subunit protein uL30, found in Pyrococcus horikoshii (strain ATCC 700860 / DSM 12428 / JCM 9974 / NBRC 100139 / OT-3).